The chain runs to 1255 residues: Structural polyprotein (1255 aa).

The necessary for nucleocapsid assembly and virus assembly stretch occupies residues 1-33 (MFPFQPMYPMQPMPYRNPFAAPRRPWFPRTDPF). The host transcription inhibition stretch occupies residues 33–68 (FLAMQVQELTRSMANLTFKQRRDAPPEGPPAKKPKR). The Supraphysiological nuclear export signal motif lies at 41-48 (LTRSMANL). The interval 44–119 (SMANLTFKQR…KKPGKRQRMV (76 aa)) is disordered. The short motif at 64 to 68 (KKPKR) is the Nuclear localization signal element. The segment covering 80-92 (GKKKKNQGKKKAK) has biased composition (basic residues). A binding to the viral RNA region spans residues 91-127 (AKTGPPNPKAQSGNKKKPNKKPGKRQRMVMKLESDKT). Residue Thr-93 is modified to Phosphothreonine. Over residues 104–118 (NKKKPNKKPGKRQRM) the composition is skewed to basic residues. Residues 112 to 126 (PGKRQRMVMKLESDK) form a ribosome-binding region. Ser-124 is subject to Phosphoserine. The 150-residue stretch at 126–275 (KTFPIMLEGK…KYTPENCEQW (150 aa)) folds into the Peptidase S3 domain. Position 127 is a phosphothreonine (Thr-127). His-152 functions as the Charge relay system in the catalytic mechanism. The interaction with spike glycoprotein E2 stretch occupies residues 168–173 (KKASKY). Active-site charge relay system residues include Asp-174 and Ser-226. Residues 260-264 (EKGVT) form an interaction with spike glycoprotein E2 region. The functions as an uncleaved signal peptide for the precursor of protein E3/E2 stretch occupies residues 276–287 (SLVTTMCLLANV). Over 276 to 701 (SLVTTMCLLA…HYYHRYPMST (426 aa)) the chain is Extracellular. Intrachain disulfides connect Cys-282–Cys-291, Cys-353–Cys-457, Cys-356–Cys-361, Cys-424–Cys-438, Cys-485–Cys-600, Cys-534–Cys-560, and Cys-536–Cys-554. N-linked (GlcNAc...) asparagine; by host glycosylation occurs at Asn-286. Asn-652 is a glycosylation site (N-linked (GlcNAc...) asparagine; by host). Residues 702-722 (ILGLSICAAIVTVSVAASTWL) traverse the membrane as a helical segment. At 723–757 (FCKSRVSCLTPYRLTPNARMPLCLAVLCCARTARA) the chain is on the cytoplasmic side. The interval 725–729 (KSRVS) is interaction with the capsid protein. S-palmitoyl cysteine; by host attachment occurs at residues Cys-730, Cys-750, and Cys-751. The tract at residues 730–750 (CLTPYRLTPNARMPLCLAVLC) is transient transmembrane before p62-6K protein processing. Cys-730 and Cys-751 form a disulfide bridge. Topologically, residues 758–769 (ETTWESLDHLWN) are extracellular. A helical transmembrane segment spans residues 770-790 (NNQQMFWIQLLIPLAALIVVT). Arg-791 is a topological domain (cytoplasmic). A helical transmembrane segment spans residues 792 to 812 (LLKCVCCVVPFLVVAGAAGAG). Topologically, residues 813-1225 (AYEHATTMPS…SKTAWTWLTS (413 aa)) are extracellular. 4 disulfide bridges follow: Cys-862-Cys-927, Cys-875-Cys-907, Cys-876-Cys-909, and Cys-881-Cys-891. The E1 fusion peptide loop stretch occupies residues 897 to 914 (VYPFMWGGAYCFCDTENT). Asn-947 and Asn-1083 each carry an N-linked (GlcNAc...) asparagine; by host glycan. Intrachain disulfides connect Cys-1072–Cys-1084, Cys-1114–Cys-1189, Cys-1119–Cys-1193, and Cys-1141–Cys-1183. A helical membrane pass occupies residues 1226–1246 (LLGGSAVIIIIGLVLATIVAM). Residues 1247–1255 (YVLTNQKHN) are Cytoplasmic-facing.

Homodimer. Homomultimer. Interacts with host karyopherin KPNA4; this interaction allows the nuclear import of the viral capsid protein. Interacts with spike glycoprotein E2. Interacts with host IRAK1; the interaction leads to inhibition of IRAK1-dependent signaling. Part of a tetrameric complex composed of host CRM1, host importin alpha/beta dimer and the viral capsid; this complex blocks the receptor-mediated transport through the nuclear pore. Interacts with host phosphatase PPP1CA; this interaction dephosphorylates the capsid protein, which increases its ability to bind to the viral genome. As to quaternary structure, the precursor of protein E3/E2 and E1 form a heterodimer shortly after synthesis. In terms of assembly, interacts with spike glycoprotein E2. The precursor of protein E3/E2 and E1 form a heterodimer shortly after synthesis. Processing of the precursor of protein E3/E2 into E2 and E3 results in a heterodimer of the spike glycoproteins E2 and E1. Spike at virion surface are constituted of three E2-E1 heterodimers. After target cell attachment and endocytosis, E1 change conformation to form homotrimers. Interacts with 6K protein. Interacts with host LDLRAD3; this interaction mediates viral entry to the host cell. Interacts with spike glycoprotein E1. Processing of the precursor of protein E3/E2 into E2 and E3 results in a heterodimer of the spike glycoproteins E2 and E1. Spike at virion surface are constituted of a trimer of E2-E1 heterodimers. Interacts with 6K protein. Interacts with host LDLRAD3; this interaction mediates viral entry to the host cell. As to quaternary structure, oligomer. Interacts with spike glycoprotein E1. Interacts with spike glycoprotein E2. In terms of processing, structural polyprotein: Specific enzymatic cleavages in vivo yield mature proteins. Capsid protein is auto-cleaved during polyprotein translation, unmasking a signal peptide at the N-terminus of the precursor of E3/E2. The remaining polyprotein is then targeted to the host endoplasmic reticulum, where host signal peptidase cleaves it into pE2, 6K and E1 proteins. pE2 is further processed to mature E3 and E2 by host furin in trans-Golgi vesicle. Phosphorylated on serine and threonine residues. Post-translationally, palmitoylated via thioester bonds. These palmitoylations may induce disruption of the C-terminus transmembrane. This would result in the reorientation of E2 C-terminus from lumenal to cytoplasmic side. In terms of processing, N-glycosylated. Palmitoylated via thioester bonds.

Its subcellular location is the virion. It is found in the host cytoplasm. The protein resides in the host cell membrane. The protein localises to the host nucleus. It localises to the virion membrane. Its subcellular location is the host Golgi apparatus. It is found in the host trans-Golgi network. The protein resides in the host endoplasmic reticulum. It catalyses the reaction Autocatalytic release of the core protein from the N-terminus of the togavirus structural polyprotein by hydrolysis of a -Trp-|-Ser- bond.. Its function is as follows. Forms an icosahedral capsid with a T=4 symmetry composed of 240 copies of the capsid protein surrounded by a lipid membrane through which penetrate 80 spikes composed of trimers of E1-E2 heterodimers. The capsid protein binds to the viral RNA genome at a site adjacent to a ribosome binding site for viral genome translation following genome release. Possesses a protease activity that results in its autocatalytic cleavage from the nascent structural protein. Following its self-cleavage, the capsid protein transiently associates with ribosomes, and within several minutes the protein binds to viral RNA and rapidly assembles into icosahedric core particles. The resulting nucleocapsid eventually associates with the cytoplasmic domain of the spike glycoprotein E2 at the cell membrane, leading to budding and formation of mature virions. In case of infection, new virions attach to target cells and after clathrin-mediated endocytosis their membrane fuses with the host endosomal membrane. This leads to the release of the nucleocapsid into the cytoplasm, followed by an uncoating event necessary for the genomic RNA to become accessible. The uncoating might be triggered by the interaction of capsid proteins with ribosomes. Binding of ribosomes would release the genomic RNA since the same region is genomic RNA-binding and ribosome-binding. Specifically inhibits interleukin-1 receptor-associated kinase 1/IRAK1-dependent signaling during viral entry, representing a means by which the alphaviruses may evade innate immune detection and activation prior to viral gene expression. Inhibits host transcription. Forms a tetrameric complex with XPO1/CRM1 and the nuclear import receptor importin. This complex blocks the central channel of host nuclear pores thereby inhibiting the receptor-mediated nuclear transport and thus the host mRNA and rRNA transcription. The inhibition of transcription is linked to a cytopathic effect on the host cell. Provides the signal sequence for the translocation of the precursor of protein E3/E2 to the host endoplasmic reticulum. Furin-cleaved E3 remains associated with spike glycoprotein E1 and mediates pH protection of the latter during the transport via the secretory pathway. After virion release from the host cell, the assembly protein E3 is gradually released in the extracellular space. Functionally, plays a role in viral attachment to target host cell, by binding to the cell receptor LDLRAD3. Synthesized as a p62 precursor which is processed by furin at the cell membrane just before virion budding, giving rise to E2-E1 heterodimer. The p62-E1 heterodimer is stable, whereas E2-E1 is unstable and dissociate at low pH. p62 is processed at the last step, presumably to avoid E1 fusion activation before its final export to cell surface. E2 C-terminus contains a transitory transmembrane that would be disrupted by palmitoylation, resulting in reorientation of the C-terminal tail from lumenal to cytoplasmic side. This step is critical since E2 C-terminus is involved in budding by interacting with capsid proteins. This release of E2 C-terminus in cytoplasm occurs lately in protein export, and precludes premature assembly of particles at the endoplasmic reticulum membrane. In terms of biological role, acts as a viroporin that participates in virus glycoprotein processing and transport to the plasma membrane, cell permeabilization and budding of viral particles. Disrupts the calcium homeostasis of the cell, probably at the endoplasmic reticulum level. This leads to cytoplasmic calcium elevation. Because of its lipophilic properties, the 6K protein is postulated to influence the selection of lipids that interact with the transmembrane domains of the glycoproteins, which, in turn, affects the deformability of the bilayer required for the extreme curvature that occurs as budding proceeds. Present in low amount in virions, about 3% compared to viral glycoproteins. Its function is as follows. Class II viral fusion protein. Fusion activity is inactive as long as E1 is bound to E2 in mature virion. After virus attachment to cell receptor LDLRAD3 and endocytosis, acidification of the endosome induce dissociation of E1/E2 heterodimer and concomitant trimerization of the E1 subunits. This E1 trimer is fusion active, and promotes release of viral nucleocapsid in cytoplasm after endosome and viral membrane fusion. Efficient fusion requires the presence of cholesterol and sphingolipid in the target membrane. In Venezuelan equine encephalitis virus (strain P676) (VEEV), this protein is Structural polyprotein.